Reading from the N-terminus, the 753-residue chain is Neuroendocrine convertase 1 (753 aa).

Positions 1 to 27 (MEQRGWTLQCTAFAFFCVWCALNSVKA) are cleaved as a signal peptide. Residues 28–110 (KRQFVNEWAA…QQYEKERSKR (83 aa)) constitute a propeptide that is removed on maturation. The region spanning 129-450 (QWYLQDTRMT…FGLLNAKALV (322 aa)) is the Peptidase S8 domain. Catalysis depends on charge relay system residues Asp-167 and His-208. 2 cysteine pairs are disulfide-bonded: Cys-225-Cys-374 and Cys-317-Cys-347. Residue Ser-382 is the Charge relay system of the active site. Asn-401 carries N-linked (GlcNAc...) asparagine glycosylation. The P/Homo B domain occupies 460–597 (NVPEKKECVV…KLILHGTSSQ (138 aa)). A disulfide bond links Cys-467 and Cys-494. The span at 633-651 (QKSLNGNLLVPKNSSSSNV) shows a compositional bias: polar residues. Positions 633–663 (QKSLNGNLLVPKNSSSSNVEGRRDEQVQGTP) are disordered. Residue Asn-645 is glycosylated (N-linked (GlcNAc...) asparagine).

Belongs to the peptidase S8 family. Furin subfamily. Requires Ca(2+) as cofactor.

The protein resides in the cytoplasmic vesicle. It localises to the secretory vesicle. The enzyme catalyses Release of protein hormones, neuropeptides and renin from their precursors, generally by hydrolysis of -Lys-Arg-|- bonds.. Functionally, involved in the processing of hormone and other protein precursors at sites comprised of pairs of basic amino acid residues. Substrates include POMC, renin, enkephalin, dynorphin, somatostatin, insulin and AGRP. This Mus musculus (Mouse) protein is Neuroendocrine convertase 1 (Pcsk1).